The chain runs to 114 residues: Gas vesicle protein J1 (114 aa).

The interval 13–22 is alpha helix 1; sequence LAEMLEMLLD. Beta-strand stretches follow at residues 25–35 and 40–50; these read VVVNADIAVSV and LLGIELRAAIA. Positions 46–50 match the Conserved in GvpM1/2 but not GvpA motif; sequence RAAIA. Alpha helix stretches follow at residues 52-72, 78-87, and 95-105; these read FETAAEYGLEFPTGTDMERVE, SPDQSDPASE, and TNPLSDDSTPT. The interval 63 to 114 is disordered; the sequence is PTGTDMERVESAANISPDQSDPASETQSETESTNPLSDDSTPTASTSAEETK. Residues 75-98 are compositionally biased toward polar residues; that stretch reads ANISPDQSDPASETQSETESTNPL. Residues 99 to 114 are compositionally biased toward low complexity; it reads SDDSTPTASTSAEETK.

This sequence belongs to the gas vesicle GvpA family. As to quaternary structure, gvpF to GvpM interact with each other in vitro, and may form multi-subunit complex(es). Interacts with GvpA1.

The protein resides in the gas vesicle. Its function is as follows. Proteins GvpF to GvpM might be involved in nucleating gas vesicle formation. Mutagenesis of residues 13-61 shows that almost none of them can be substituted and still make gas vesicles. A minor component of the gas vesicle. Gas vesicles are hollow, gas filled proteinaceous nanostructures found in several microbial planktonic microorganisms. They allow positioning of halobacteria at the optimal depth for growth in the poorly aerated, shallow brine pools of their habitat. Functionally, expression of a 9.5 kb p-vac DNA fragment containing 2 divergently transcribed regions (gvpD-gvpE-gvpF-gvpG-gvpH-gvpI-gvpJ-gvpK-gvpL-gvpM and gvpA-gvpC-gvpN-gvpO) allows H.volcanii to produce gas vesicles. All site-directed mutagenesis is tested in H.volcanii. A minimal gas vesicle can be made in H.volcanii by gvpA1-gvpO1 plus gvpF1-gvpG1-gvpJ1-gvpK1-gvpL1-gvpM1; lack of enough GvpJ1 prevents formation. A similar region restores gas vesicle production in H.halobium without the p-vac locus, but it still has the c-vac locus. This Halobacterium salinarum (strain ATCC 700922 / JCM 11081 / NRC-1) (Halobacterium halobium) protein is Gas vesicle protein J1 (gvpJ11).